The chain runs to 308 residues: Aspartate carbamoyltransferase catalytic subunit (308 aa).

Carbamoyl phosphate contacts are provided by Arg55 and Thr56. Lys85 lines the L-aspartate pocket. Arg106, His135, and Gln138 together coordinate carbamoyl phosphate. Residues Arg168 and Arg229 each coordinate L-aspartate. 2 residues coordinate carbamoyl phosphate: Leu267 and Pro268.

Belongs to the aspartate/ornithine carbamoyltransferase superfamily. ATCase family. In terms of assembly, heterododecamer (2C3:3R2) of six catalytic PyrB chains organized as two trimers (C3), and six regulatory PyrI chains organized as three dimers (R2).

The enzyme catalyses carbamoyl phosphate + L-aspartate = N-carbamoyl-L-aspartate + phosphate + H(+). It participates in pyrimidine metabolism; UMP biosynthesis via de novo pathway; (S)-dihydroorotate from bicarbonate: step 2/3. Functionally, catalyzes the condensation of carbamoyl phosphate and aspartate to form carbamoyl aspartate and inorganic phosphate, the committed step in the de novo pyrimidine nucleotide biosynthesis pathway. The protein is Aspartate carbamoyltransferase catalytic subunit of Laribacter hongkongensis (strain HLHK9).